Consider the following 676-residue polypeptide: Beta-taxilin (676 aa).

2 disordered regions span residues 1–55 (MEND…DISE) and 71–131 (AASL…EQKL). 2 stretches are compositionally biased toward polar residues: residues 8–25 (EKQQQVTTSPTQDNQGQS) and 34–45 (QPLSPTNQTSAQ). The segment covering 75–92 (VEKEGTTAETDKPEKEDV) has biased composition (basic and acidic residues). The segment covering 93 to 105 (GSMEDAECEDVNE) has biased composition (acidic residues). A compositionally biased stretch (basic and acidic residues) spans 106–131 (ESEKDKPAPGDASRAKEPSASKEQKL). Residues 157–461 (EEKLDLLFKK…LYRKIKQAQL (305 aa)) adopt a coiled-coil conformation. The disordered stretch occupies residues 464 to 486 (EVNGNDILEEDDDANTNPSSSEQ).

Belongs to the taxilin family. In terms of tissue distribution, specifically expressed in skeletal and cardiac muscle.

The protein localises to the cytoplasm. Promotes neurite-outgrowth. May be involved in intracellular vesicle traffic. The protein is Beta-taxilin (TXLNB) of Gallus gallus (Chicken).